A 426-amino-acid chain; its full sequence is 5-aminovalerate aminotransferase DavT (426 aa).

Residues 112–113 (GS), Y139, and 240–243 (DEVQ) each bind pyridoxal 5'-phosphate. K269 carries the N6-(pyridoxal phosphate)lysine modification. T298 contributes to the pyridoxal 5'-phosphate binding site.

The protein belongs to the class-III pyridoxal-phosphate-dependent aminotransferase family. Requires pyridoxal 5'-phosphate as cofactor.

The enzyme catalyses 5-aminopentanoate + 2-oxoglutarate = 5-oxopentanoate + L-glutamate. Its function is as follows. Catalyzes the conversion of 5-aminovalerate to 5-oxopentanoate. The protein is 5-aminovalerate aminotransferase DavT (davT) of Pseudomonas aeruginosa (strain ATCC 15692 / DSM 22644 / CIP 104116 / JCM 14847 / LMG 12228 / 1C / PRS 101 / PAO1).